An 80-amino-acid chain; its full sequence is Serine palmitoyltransferase small subunit A-B (80 aa).

Topologically, residues 1 to 21 are cytoplasmic; it reads MKVSCEDVNGPRSSLGRAWNH. The chain crosses the membrane as a helical span at residues 22 to 38; sequence VSWLYYQYLLVTALYML. The Lumenal segment spans residues 39–43; the sequence is EPWER. A helical transmembrane segment spans residues 44–66; the sequence is TVFNSMLVSIVGMALYTGYIFMP. The Cytoplasmic segment spans residues 67–80; it reads QHILAILHYFEIVQ.

It belongs to the SPTSS family. SPTSSA subfamily. As to quaternary structure, component of the serine palmitoyltransferase (SPT) complex, which is composed of SPTLC1, SPTLC2 or SPTLC3 and SPTSSA or SPTSSB. The heterodimer consisting of SPTLC1 and SPTLC2/SPTLC3 forms the catalytic core of the enzyme, while SPTSSA or SPTSSB subunits determine substrate specificity. SPT also interacts with ORMDL proteins, especially ORMDL3, which negatively regulate SPT activity in the presence of ceramides.

It is found in the endoplasmic reticulum membrane. It participates in lipid metabolism; sphingolipid metabolism. Its function is as follows. Component of the serine palmitoyltransferase multisubunit enzyme (SPT) that catalyzes the initial and rate-limiting step in sphingolipid biosynthesis by condensing L-serine and activated acyl-CoA (most commonly palmitoyl-CoA) to form long-chain bases. The SPT complex is composed of SPTLC1, SPTLC2 or SPTLC3 and SPTSSA or SPTSSB. Within this complex, the heterodimer consisting of SPTLC1 and SPTLC2/SPTLC3 forms the catalytic core. Within the SPT complex, SPTSSA stimulates the catalytic activity and plays a role in substrate specificity, which depends upon the overall complex composition. The SPTLC1-SPTLC2-SPTSSA complex shows a strong preference for C16-CoA substrate, while the SPTLC1-SPTLC3-SPTSSA isozyme uses both C14-CoA and C16-CoA as substrates, with a slight preference for C14-CoA. Independently of its action as a SPT component, may be involved in MBOAT7 localization to mitochondria-associated membranes, a membrane bridge between the endoplasmic reticulum and mitochondria, may hence affect MBOAT7-catalyzed incorporation of arachidonic acid into phosphatidylinositol. The sequence is that of Serine palmitoyltransferase small subunit A-B (sptssa-b) from Xenopus laevis (African clawed frog).